Here is a 225-residue protein sequence, read N- to C-terminus: MSIVSRTVTITISVKKLITYIELRYGMESSTCPFCQSGTLISLAAVFFCHSGMEALLSIVCSLAFFHAGTALSSLLASLPFSFSLSLSSCMPILARISDADGIVSMPGIPLGDMENNLLSCALPDSIRLFIKLFRDSISFWILFNSCMPSLSETNLSIVFCILTTSSLTILNSSSIFSLLLVVCTSACFSSAIVSLSSFNVSLSFFLNSACSASMALRTVSILEN.

A run of 4 helical transmembrane segments spans residues 40-60 (LISL…LSIV), 63-83 (LAFF…PFSF), 151-171 (LSET…LTIL), and 176-196 (IFSL…IVSL).

It localises to the membrane. This is an uncharacterized protein from Saccharomyces cerevisiae (strain ATCC 204508 / S288c) (Baker's yeast).